A 224-amino-acid chain; its full sequence is MESGAYGAPRAGGSFDLRRFLKQPQVVVRAVCLVFALIVFSCIFGEGYSNTHDSQQQYCVFNRNEDACRYGSAIGVLAFLASAFFFVVDIYFPQISNATDRKYLVIGDLLFSALWTFLWFVGFCFLTNQWAATKKNDVHVEADSARAAITFSFFSIFSWCVLAFLAYQRYKAGVDEFIQNYVDPTPDPSTAYASYPGVPADTYQQPPFTQNAESTEGYQPPPVY.

Methionine 1 is subject to N-acetylmethionine. Position 3 is a phosphoserine (serine 3). Residues 20–171 enclose the MARVEL domain; the sequence is FLKQPQVVVR…LAFLAYQRYK (152 aa). A run of 4 helical transmembrane segments spans residues 26–46, 73–93, 105–125, and 147–167; these read VVVR…IFGE, AIGV…IYFP, VIGD…GFCF, and AAIT…FLAY. Positions 196–224 are disordered; sequence PGVPADTYQQPPFTQNAESTEGYQPPPVY. A compositionally biased stretch (polar residues) spans 202–217; sequence TYQQPPFTQNAESTEG.

It belongs to the synaptogyrin family. In terms of processing, may be tyrosine phosphorylated by Src.

The protein localises to the cytoplasmic vesicle membrane. It is found in the cytoplasmic vesicle. Its subcellular location is the secretory vesicle. The protein resides in the synaptic vesicle membrane. May play a role in regulated exocytosis. In neuronal cells, modulates the localization of synaptophysin/SYP into synaptic-like microvesicles and may therefore play a role in the formation and/or the maturation of this vesicles. May also play a role in GLUT4 storage and transport to the plasma membrane. In Bos taurus (Bovine), this protein is Synaptogyrin-2.